Reading from the N-terminus, the 328-residue chain is Probable magnesium transporter NIPA6 (328 aa).

Residues 1–4 (METD) are Extracellular-facing. Residues 5 to 25 (NGKGLILAVASSVFIGSSFIL) form a helical membrane-spanning segment. The Cytoplasmic segment spans residues 26 to 51 (KKKGLKRAGAIGTRAGYGGYTYLLEP). Residues 52 to 72 (LWWAGMVTMIVGEAANFVAYI) form a helical membrane-spanning segment. Residues 73–76 (YAPA) lie on the Extracellular side of the membrane. A helical membrane pass occupies residues 77–97 (VLVTPLGALSIIISAVLAHFL). The Cytoplasmic portion of the chain corresponds to 98–104 (LKEKLKK). The helical transmembrane segment at 105–125 (MGVLGCVSCIVGSVVIVIHAP) threads the bilayer. The Extracellular segment spans residues 126–142 (KEQTPNSVEEIWNLATQ). Residues 143–163 (PAFLIYVAITMSIVLALILHF) form a helical membrane-spanning segment. Residues 164–175 (EPLCGQTNILVY) are Cytoplasmic-facing. The helical transmembrane segment at 176-196 (IGICSLMGALTVMSIKAIGIA) threads the bilayer. Residues 197-209 (IKLTMEGVSQIGY) lie on the Extracellular side of the membrane. The chain crosses the membrane as a helical span at residues 210-230 (PQTWLFVMVAVTCVVTQLIYL). The Cytoplasmic segment spans residues 231-240 (NKALDTFNAA). Residues 241–261 (IVSPVYYVMFTTLTIVASAIM) form a helical membrane-spanning segment. At 262-269 (FKDWSGQD) the chain is on the extracellular side. The chain crosses the membrane as a helical span at residues 270–290 (AASVASELCGFITVLTGTMIL). Residues 291–328 (HGTREEEQQQASSEHVRWYDSRKSMNEEHLVSLYSPEY) lie on the Cytoplasmic side of the membrane.

The protein belongs to the NIPA (TC 2.A.7) family. As to quaternary structure, homodimer.

It localises to the cell membrane. Its subcellular location is the early endosome. In terms of biological role, acts as a Mg(2+) transporter. Can also transport other divalent cations such as Fe(2+), Sr(2+), Ba(2+), Mn(2+) and Co(2+) but to a much less extent than Mg(2+). The protein is Probable magnesium transporter NIPA6 of Arabidopsis thaliana (Mouse-ear cress).